The primary structure comprises 338 residues: Purple acid phosphatase 17 (338 aa).

Positions 1–31 (MNSGRRSLMSATASLSLLLCIFTTFVVVSNG) are cleaved as a signal peptide. Asp-53 contributes to the Fe cation binding site. Asn-61 carries N-linked (GlcNAc...) asparagine glycosylation. The Fe cation site is built by Asp-86 and Tyr-89. A Zn(2+)-binding site is contributed by Asp-86. Asn-124 and His-218 together coordinate Zn(2+). His-227 acts as the Proton donor in catalysis. Residue His-253 coordinates Zn(2+). 253–255 (HDH) is a substrate binding site. Position 255 (His-255) interacts with Fe cation.

This sequence belongs to the metallophosphoesterase superfamily. Purple acid phosphatase family. As to quaternary structure, homodimer. Fe cation is required as a cofactor. Zn(2+) serves as cofactor. Expressed in roots, stems, leaves, flowers and siliques.

It localises to the secreted. It catalyses the reaction a phosphate monoester + H2O = an alcohol + phosphate. The enzyme catalyses 2 a phenolic donor + H2O2 = 2 a phenolic radical donor + 2 H2O. With respect to regulation, inhibited by phosphate and molybdate. In terms of biological role, metallo-phosphoesterase involved in phosphate metabolism. Has a peroxidase activity. This chain is Purple acid phosphatase 17 (PAP17), found in Arabidopsis thaliana (Mouse-ear cress).